We begin with the raw amino-acid sequence, 360 residues long: Phospho-N-acetylmuramoyl-pentapeptide-transferase (360 aa).

The next 10 membrane-spanning stretches (helical) occupy residues 21-41 (YITV…LWIG), 73-93 (TMGG…WANL), 94-114 (ANSY…IGFV), 132-152 (WKYF…YWLG), 168-188 (IMPQ…VGTG), 199-219 (GLAI…AWAT), 239-259 (VVVF…FNTY), 263-283 (VFMG…VAIL), 288-308 (FLLV…ILQV), and 338-358 (VIIR…VTLK).

It belongs to the glycosyltransferase 4 family. MraY subfamily. The cofactor is Mg(2+).

It is found in the cell inner membrane. It catalyses the reaction UDP-N-acetyl-alpha-D-muramoyl-L-alanyl-gamma-D-glutamyl-meso-2,6-diaminopimeloyl-D-alanyl-D-alanine + di-trans,octa-cis-undecaprenyl phosphate = di-trans,octa-cis-undecaprenyl diphospho-N-acetyl-alpha-D-muramoyl-L-alanyl-D-glutamyl-meso-2,6-diaminopimeloyl-D-alanyl-D-alanine + UMP. It functions in the pathway cell wall biogenesis; peptidoglycan biosynthesis. Its function is as follows. Catalyzes the initial step of the lipid cycle reactions in the biosynthesis of the cell wall peptidoglycan: transfers peptidoglycan precursor phospho-MurNAc-pentapeptide from UDP-MurNAc-pentapeptide onto the lipid carrier undecaprenyl phosphate, yielding undecaprenyl-pyrophosphoryl-MurNAc-pentapeptide, known as lipid I. The sequence is that of Phospho-N-acetylmuramoyl-pentapeptide-transferase from Haemophilus influenzae (strain 86-028NP).